A 174-amino-acid polypeptide reads, in one-letter code: Small ribosomal subunit protein uS5 (174 aa).

Positions 20–83 (IEDQLVAINR…EAGKKRMIKV (64 aa)) constitute an S5 DRBM domain.

This sequence belongs to the universal ribosomal protein uS5 family. As to quaternary structure, part of the 30S ribosomal subunit. Contacts proteins S4 and S8.

In terms of biological role, with S4 and S12 plays an important role in translational accuracy. Located at the back of the 30S subunit body where it stabilizes the conformation of the head with respect to the body. The chain is Small ribosomal subunit protein uS5 from Lactobacillus gasseri (strain ATCC 33323 / DSM 20243 / BCRC 14619 / CIP 102991 / JCM 1131 / KCTC 3163 / NCIMB 11718 / NCTC 13722 / AM63).